The sequence spans 159 residues: C-type lectin 1 (159 aa).

The N-terminal stretch at Met-1–Gly-23 is a signal peptide. 4 cysteine pairs are disulfide-bonded: Cys-26–Cys-37, Cys-54–Cys-155, Cys-61–Cys-157, and Cys-130–Cys-147. The C-type lectin domain occupies Met-33–Gln-156. Asn-118 carries N-linked (GlcNAc...) asparagine glycosylation. The short motif at Leu-119–Asp-121 is the Sugar-binding element. Residues Asp-121, Asp-127, and Asn-143 each contribute to the Ca(2+) site.

The protein belongs to the true venom lectin family. In terms of assembly, homodimer; disulfide-linked. Expressed by the venom gland.

The protein localises to the secreted. Its function is as follows. Lectin which recognizes specific carbohydrate structures and agglutinates a variety of animal cells by binding to cell-surface glycoproteins and glycolipids. May be a calcium-dependent lectin. This is C-type lectin 1 from Bitis gabonica (Gaboon adder).